The primary structure comprises 459 residues: Methylenetetrahydrofolate--tRNA-(uracil-5-)-methyltransferase TrmFO (459 aa).

15 to 20 lines the FAD pocket; it reads GAGLAG.

It belongs to the MnmG family. TrmFO subfamily. The cofactor is FAD.

The protein resides in the cytoplasm. The enzyme catalyses uridine(54) in tRNA + (6R)-5,10-methylene-5,6,7,8-tetrahydrofolate + NADH + H(+) = 5-methyluridine(54) in tRNA + (6S)-5,6,7,8-tetrahydrofolate + NAD(+). The catalysed reaction is uridine(54) in tRNA + (6R)-5,10-methylene-5,6,7,8-tetrahydrofolate + NADPH + H(+) = 5-methyluridine(54) in tRNA + (6S)-5,6,7,8-tetrahydrofolate + NADP(+). Catalyzes the folate-dependent formation of 5-methyl-uridine at position 54 (M-5-U54) in all tRNAs. This is Methylenetetrahydrofolate--tRNA-(uracil-5-)-methyltransferase TrmFO from Syntrophotalea carbinolica (strain DSM 2380 / NBRC 103641 / GraBd1) (Pelobacter carbinolicus).